Reading from the N-terminus, the 692-residue chain is Potassium-transporting ATPase ATP-binding subunit (692 aa).

4 consecutive transmembrane segments (helical) span residues 50 to 70 (PIMF…FLPS), 77 to 97 (GWFN…ANFA), 240 to 260 (LTLI…YLGF), and 266 to 286 (VLVA…LSAI). The 4-aspartylphosphate intermediate role is filled by Asp319. Residues Asp356, Glu360, 388 to 395 (FKAETRMS), and Lys407 each bind ATP. Residues Asp530 and Asp534 each coordinate Mg(2+). Helical transmembrane passes span 600–620 (FAII…LNIM), 628–648 (AILS…PLAM), and 672–692 (GGVI…GLFI).

The protein belongs to the cation transport ATPase (P-type) (TC 3.A.3) family. Type IA subfamily. The system is composed of three essential subunits: KdpA, KdpB and KdpC.

Its subcellular location is the cell membrane. The enzyme catalyses K(+)(out) + ATP + H2O = K(+)(in) + ADP + phosphate + H(+). Functionally, part of the high-affinity ATP-driven potassium transport (or Kdp) system, which catalyzes the hydrolysis of ATP coupled with the electrogenic transport of potassium into the cytoplasm. This subunit is responsible for energy coupling to the transport system and for the release of the potassium ions to the cytoplasm. In Bacillus cereus (strain 03BB102), this protein is Potassium-transporting ATPase ATP-binding subunit.